Consider the following 95-residue polypeptide: Putative pterin-4-alpha-carbinolamine dehydratase (95 aa).

The protein belongs to the pterin-4-alpha-carbinolamine dehydratase family.

It catalyses the reaction (4aS,6R)-4a-hydroxy-L-erythro-5,6,7,8-tetrahydrobiopterin = (6R)-L-erythro-6,7-dihydrobiopterin + H2O. The polypeptide is Putative pterin-4-alpha-carbinolamine dehydratase (Nocardia farcinica (strain IFM 10152)).